Reading from the N-terminus, the 413-residue chain is Serine/threonine-protein kinase ppk27 (413 aa).

One can recognise a Protein kinase domain in the interval Trp-102–Phe-403. ATP-binding positions include Ile-108–Val-116 and Lys-133. Asp-231 serves as the catalytic Proton acceptor.

The protein belongs to the protein kinase superfamily. Ser/Thr protein kinase family.

The protein localises to the cytoplasm. It catalyses the reaction L-seryl-[protein] + ATP = O-phospho-L-seryl-[protein] + ADP + H(+). The enzyme catalyses L-threonyl-[protein] + ATP = O-phospho-L-threonyl-[protein] + ADP + H(+). In Schizosaccharomyces pombe (strain 972 / ATCC 24843) (Fission yeast), this protein is Serine/threonine-protein kinase ppk27 (ppk27).